The sequence spans 338 residues: MDIRQDYPLSKRNTFGIAARTDWWIDYTCDADIDRLVKDEFFQECRVQTIGEGSNLLFLANFHGILLHSEVKGITELHKDQDSILLRVGSGMVWDDFVAYAVENNYYGIENLSLIPGQVGASAVQNIGAYGVEVSQLIEAVHARHYRTGESRVFRNEDCRYAYRYSIFKEPDYAEWAIMYVDYRLRLRPSFSLEYKALAKVLEEERITPTLQSIRDTVIRIRNSKLPDPATIGNAGSFFVNPVVSAEKFNTLQTEYPSIPSYPQPDGSVKVPAGWLIEQCGYKGHRSGAVGVYEHQALVLVNYGGATGTQVGALAEEIIGNVRQKFGITLHPEVKYIL.

An FAD-binding PCMH-type domain is found at 17-188 (IAARTDWWID…MYVDYRLRLR (172 aa)). R164 is a catalytic residue. Residue S237 is the Proton donor of the active site. E333 is a catalytic residue.

This sequence belongs to the MurB family. FAD serves as cofactor.

The protein localises to the cytoplasm. It catalyses the reaction UDP-N-acetyl-alpha-D-muramate + NADP(+) = UDP-N-acetyl-3-O-(1-carboxyvinyl)-alpha-D-glucosamine + NADPH + H(+). It functions in the pathway cell wall biogenesis; peptidoglycan biosynthesis. Cell wall formation. The sequence is that of UDP-N-acetylenolpyruvoylglucosamine reductase from Porphyromonas gingivalis (strain ATCC 33277 / DSM 20709 / CIP 103683 / JCM 12257 / NCTC 11834 / 2561).